Consider the following 377-residue polypeptide: Chaperone protein DnaJ (377 aa).

A J domain is found at 4-69 (DYYEALGVTR…QKRAAYDRFG (66 aa)). A CR-type zinc finger spans residues 135 to 213 (GKTAQIRVPT…CHGQGRVTQE (79 aa)). Positions 148, 151, 165, 168, 187, 190, 201, and 204 each coordinate Zn(2+). CXXCXGXG motif repeat units follow at residues 148–155 (CDECSGSG), 165–172 (CTMCSGSG), 187–194 (CPGCNGRG), and 201–208 (CEKCHGQG).

It belongs to the DnaJ family. Homodimer. Zn(2+) serves as cofactor.

The protein resides in the cytoplasm. In terms of biological role, participates actively in the response to hyperosmotic and heat shock by preventing the aggregation of stress-denatured proteins and by disaggregating proteins, also in an autonomous, DnaK-independent fashion. Unfolded proteins bind initially to DnaJ; upon interaction with the DnaJ-bound protein, DnaK hydrolyzes its bound ATP, resulting in the formation of a stable complex. GrpE releases ADP from DnaK; ATP binding to DnaK triggers the release of the substrate protein, thus completing the reaction cycle. Several rounds of ATP-dependent interactions between DnaJ, DnaK and GrpE are required for fully efficient folding. Also involved, together with DnaK and GrpE, in the DNA replication of plasmids through activation of initiation proteins. The chain is Chaperone protein DnaJ from Brucella ovis (strain ATCC 25840 / 63/290 / NCTC 10512).